We begin with the raw amino-acid sequence, 350 residues long: Histidinol-phosphate aminotransferase (350 aa).

Lys-209 carries the N6-(pyridoxal phosphate)lysine modification.

It belongs to the class-II pyridoxal-phosphate-dependent aminotransferase family. Histidinol-phosphate aminotransferase subfamily. In terms of assembly, homodimer. Requires pyridoxal 5'-phosphate as cofactor.

It catalyses the reaction L-histidinol phosphate + 2-oxoglutarate = 3-(imidazol-4-yl)-2-oxopropyl phosphate + L-glutamate. It participates in amino-acid biosynthesis; L-histidine biosynthesis; L-histidine from 5-phospho-alpha-D-ribose 1-diphosphate: step 7/9. The chain is Histidinol-phosphate aminotransferase from Geobacter sp. (strain M21).